Here is a 36-residue protein sequence, read N- to C-terminus: Photosystem I reaction center subunit VIII (36 aa).

The helical transmembrane segment at proline 7 to tyrosine 29 threads the bilayer.

The protein belongs to the PsaI family.

The protein localises to the plastid. It is found in the chloroplast thylakoid membrane. Its function is as follows. May help in the organization of the PsaL subunit. The sequence is that of Photosystem I reaction center subunit VIII from Anthoceros angustus (Hornwort).